The sequence spans 307 residues: Pantothenate kinase (307 aa).

Residue 87 to 94 (GSVAVGKS) coordinates ATP.

Belongs to the prokaryotic pantothenate kinase family.

The protein localises to the cytoplasm. The catalysed reaction is (R)-pantothenate + ATP = (R)-4'-phosphopantothenate + ADP + H(+). It functions in the pathway cofactor biosynthesis; coenzyme A biosynthesis; CoA from (R)-pantothenate: step 1/5. The chain is Pantothenate kinase from Vibrio vulnificus (strain YJ016).